The sequence spans 740 residues: 1,4-alpha-glucan branching enzyme GlgB (740 aa).

Residue Asp419 is the Nucleophile of the active site. Glu472 (proton donor) is an active-site residue.

Belongs to the glycosyl hydrolase 13 family. GlgB subfamily. In terms of assembly, monomer.

It catalyses the reaction Transfers a segment of a (1-&gt;4)-alpha-D-glucan chain to a primary hydroxy group in a similar glucan chain.. Its pathway is glycan biosynthesis; glycogen biosynthesis. Its function is as follows. Catalyzes the formation of the alpha-1,6-glucosidic linkages in glycogen by scission of a 1,4-alpha-linked oligosaccharide from growing alpha-1,4-glucan chains and the subsequent attachment of the oligosaccharide to the alpha-1,6 position. The sequence is that of 1,4-alpha-glucan branching enzyme GlgB from Thiobacillus denitrificans (strain ATCC 25259 / T1).